Consider the following 213-residue polypeptide: Phosphatidylserine decarboxylase proenzyme (213 aa).

S182 (schiff-base intermediate with substrate; via pyruvic acid) is an active-site residue. A Pyruvic acid (Ser); by autocatalysis modification is found at S182.

This sequence belongs to the phosphatidylserine decarboxylase family. PSD-A subfamily. Heterodimer of a large membrane-associated beta subunit and a small pyruvoyl-containing alpha subunit. Requires pyruvate as cofactor. In terms of processing, is synthesized initially as an inactive proenzyme. Formation of the active enzyme involves a self-maturation process in which the active site pyruvoyl group is generated from an internal serine residue via an autocatalytic post-translational modification. Two non-identical subunits are generated from the proenzyme in this reaction, and the pyruvate is formed at the N-terminus of the alpha chain, which is derived from the carboxyl end of the proenzyme. The post-translation cleavage follows an unusual pathway, termed non-hydrolytic serinolysis, in which the side chain hydroxyl group of the serine supplies its oxygen atom to form the C-terminus of the beta chain, while the remainder of the serine residue undergoes an oxidative deamination to produce ammonia and the pyruvoyl prosthetic group on the alpha chain.

The protein resides in the cell membrane. It carries out the reaction a 1,2-diacyl-sn-glycero-3-phospho-L-serine + H(+) = a 1,2-diacyl-sn-glycero-3-phosphoethanolamine + CO2. The protein operates within phospholipid metabolism; phosphatidylethanolamine biosynthesis; phosphatidylethanolamine from CDP-diacylglycerol: step 2/2. Catalyzes the formation of phosphatidylethanolamine (PtdEtn) from phosphatidylserine (PtdSer). The sequence is that of Phosphatidylserine decarboxylase proenzyme from Chlorobium phaeobacteroides (strain BS1).